A 312-amino-acid chain; its full sequence is MNKIPLIVIVGPTAVGKTALSIEIAKAVNGEIISGDAIQVYRGMDIGSAKITQEEMEGIPHHLIDILNPDEAYSAAQFKVHAEKLIEDIYSRGKTPMIVGGTGLYIQSVLYEYEFVEEDQALKKELMDHYESLDKETLYRLLTEKDTKAASQIHINNRQRVLRALTYYEMHHKSITDQKKSHTLSSKYDTYIIGLNMPRPTLYDRINRRVLLMVEQGLVQEVETLISKGYRQSQSMTAIGYKEMIPYIDGEVSLNQAIENLQQNSRNFAKRQLTWFNNQMTIEWFDTSELTIESIVEQIAANIPRDDNDEFS.

11–18 is a binding site for ATP; that stretch reads GPTAVGKT. 13 to 18 contacts substrate; it reads TAVGKT. The interval 159-163 is interaction with substrate tRNA; the sequence is QRVLR.

This sequence belongs to the IPP transferase family. As to quaternary structure, monomer. Requires Mg(2+) as cofactor.

The catalysed reaction is adenosine(37) in tRNA + dimethylallyl diphosphate = N(6)-dimethylallyladenosine(37) in tRNA + diphosphate. Functionally, catalyzes the transfer of a dimethylallyl group onto the adenine at position 37 in tRNAs that read codons beginning with uridine, leading to the formation of N6-(dimethylallyl)adenosine (i(6)A). This Macrococcus caseolyticus (strain JCSC5402) (Macrococcoides caseolyticum) protein is tRNA dimethylallyltransferase.